Here is a 426-residue protein sequence, read N- to C-terminus: Glutamate-1-semialdehyde 2,1-aminomutase (426 aa).

Lys-265 is modified (N6-(pyridoxal phosphate)lysine).

Belongs to the class-III pyridoxal-phosphate-dependent aminotransferase family. HemL subfamily. Homodimer. It depends on pyridoxal 5'-phosphate as a cofactor.

Its subcellular location is the cytoplasm. It carries out the reaction (S)-4-amino-5-oxopentanoate = 5-aminolevulinate. The protein operates within porphyrin-containing compound metabolism; protoporphyrin-IX biosynthesis; 5-aminolevulinate from L-glutamyl-tRNA(Glu): step 2/2. The sequence is that of Glutamate-1-semialdehyde 2,1-aminomutase from Salmonella paratyphi A (strain ATCC 9150 / SARB42).